The sequence spans 642 residues: Threonine--tRNA ligase (642 aa).

A TGS domain is found at 1–61; the sequence is MPVITLPDGS…ETDSELSIIT (61 aa). The catalytic stretch occupies residues 243–534; it reads DHRKIGKQLD…LIEEYAGKFP (292 aa). 3 residues coordinate Zn(2+): cysteine 334, histidine 385, and histidine 511.

It belongs to the class-II aminoacyl-tRNA synthetase family. In terms of assembly, homodimer. Zn(2+) is required as a cofactor.

Its subcellular location is the cytoplasm. The catalysed reaction is tRNA(Thr) + L-threonine + ATP = L-threonyl-tRNA(Thr) + AMP + diphosphate + H(+). Catalyzes the attachment of threonine to tRNA(Thr) in a two-step reaction: L-threonine is first activated by ATP to form Thr-AMP and then transferred to the acceptor end of tRNA(Thr). Also edits incorrectly charged L-seryl-tRNA(Thr). This Shewanella halifaxensis (strain HAW-EB4) protein is Threonine--tRNA ligase.